Here is a 154-residue protein sequence, read N- to C-terminus: Transcription antitermination protein NusB (154 aa).

This sequence belongs to the NusB family.

Involved in transcription antitermination. Required for transcription of ribosomal RNA (rRNA) genes. Binds specifically to the boxA antiterminator sequence of the ribosomal RNA (rrn) operons. This chain is Transcription antitermination protein NusB, found in Oleidesulfovibrio alaskensis (strain ATCC BAA-1058 / DSM 17464 / G20) (Desulfovibrio alaskensis).